Consider the following 494-residue polypeptide: UDP-N-acetylmuramoyl-L-alanyl-D-glutamate--L-lysine ligase (494 aa).

Ser-30 lines the UDP-N-acetyl-alpha-D-muramoyl-L-alanyl-D-glutamate pocket. 110-116 (GTNGKTS) provides a ligand contact to ATP. UDP-N-acetyl-alpha-D-muramoyl-L-alanyl-D-glutamate contacts are provided by residues 152 to 153 (TT), Ser-179, and Arg-187. Lys-219 carries the N6-carboxylysine modification. The L-lysine recognition motif motif lies at 406 to 409 (DNPA).

This sequence belongs to the MurCDEF family. MurE subfamily. Carboxylation is probably crucial for Mg(2+) binding and, consequently, for the gamma-phosphate positioning of ATP.

The protein localises to the cytoplasm. It carries out the reaction UDP-N-acetyl-alpha-D-muramoyl-L-alanyl-D-glutamate + L-lysine + ATP = UDP-N-acetyl-alpha-D-muramoyl-L-alanyl-gamma-D-glutamyl-L-lysine + ADP + phosphate + H(+). Its pathway is cell wall biogenesis; peptidoglycan biosynthesis. Its function is as follows. Catalyzes the addition of L-lysine to the nucleotide precursor UDP-N-acetylmuramoyl-L-alanyl-D-glutamate (UMAG) in the biosynthesis of bacterial cell-wall peptidoglycan. The chain is UDP-N-acetylmuramoyl-L-alanyl-D-glutamate--L-lysine ligase from Staphylococcus aureus (strain bovine RF122 / ET3-1).